The chain runs to 170 residues: Adenine phosphoribosyltransferase (170 aa).

The protein belongs to the purine/pyrimidine phosphoribosyltransferase family. As to quaternary structure, homodimer.

The protein resides in the cytoplasm. The catalysed reaction is AMP + diphosphate = 5-phospho-alpha-D-ribose 1-diphosphate + adenine. Its pathway is purine metabolism; AMP biosynthesis via salvage pathway; AMP from adenine: step 1/1. Functionally, catalyzes a salvage reaction resulting in the formation of AMP, that is energically less costly than de novo synthesis. The sequence is that of Adenine phosphoribosyltransferase from Halothermothrix orenii (strain H 168 / OCM 544 / DSM 9562).